Consider the following 1690-residue polypeptide: rRNA biogenesis protein rrp5 (1690 aa).

2 disordered regions span residues 1 to 42 and 59 to 90; these read MAGN…GASS and FMES…ELDN. A compositionally biased stretch (polar residues) spans 11 to 32; it reads ASEGSDSQGNERISSLSANEAT. Positions 72–83 are enriched in basic residues; that stretch reads KTRPKKKGSKKS. S1 motif domains follow at residues 109 to 209, 226 to 289, 306 to 376, 398 to 473, 490 to 559, 579 to 648, 666 to 739, 761 to 830, 866 to 942, 973 to 1044, 1053 to 1122, 1147 to 1216, and 1236 to 1307; these read GSLI…LSLK, GSMI…LTAT, GDYI…VSFL, GFIV…LSFQ, GQFV…LTLK, GTQT…VGCR, GSVL…LSLK, GIKY…MSFK, GKIT…ISHR, GDEV…IGPL, GSRL…LSAR, GDIC…MSLK, and GSNL…LGLK. Residues 1313–1424 form a disordered region; the sequence is SDSDISMSDN…EEKDLDEIPS (112 aa). Composition is skewed to acidic residues over residues 1348–1367, 1390–1400, and 1412–1421; these read QSEE…EEEP, DTEDSEDEEDE, and FDDEEKDLDE. At Thr-1391 the chain carries Phosphothreonine. A Phosphoserine modification is found at Ser-1394. HAT repeat units lie at residues 1420–1452, 1526–1558, and 1596–1628; these read DEIP…YHLN, GKVD…FLLN, and GDPE…MEMK. Phosphoserine is present on residues Ser-1684 and Ser-1686.

Component of the ribosomal small subunit (SSU) processome.

It is found in the nucleus. Its subcellular location is the nucleolus. Involved in the biogenesis of rRNA. Required for the formation of 18S and 5.8S rRNA. The polypeptide is rRNA biogenesis protein rrp5 (Schizosaccharomyces pombe (strain 972 / ATCC 24843) (Fission yeast)).